The primary structure comprises 233 residues: Ribosome maturation factor RimP (233 aa).

Residues 167-179 (RGKAAEREKKRDL) show a composition bias toward basic and acidic residues. The tract at residues 167–233 (RGKAAEREKK…RARRGEIDPD (67 aa)) is disordered. Over residues 187-196 (PHAKPAAQAK) the composition is skewed to low complexity. Over residues 220 to 233 (LAADRARRGEIDPD) the composition is skewed to basic and acidic residues.

Belongs to the RimP family.

It localises to the cytoplasm. Its function is as follows. Required for maturation of 30S ribosomal subunits. In Bradyrhizobium sp. (strain ORS 278), this protein is Ribosome maturation factor RimP.